The primary structure comprises 2148 residues: Polyketide synthase 1 (2148 aa).

Residues 19 to 261 (FIFGDQSSCN…TPLAVHAPYH (243 aa)) are N-terminal acylcarrier protein transacylase domain (SAT). Positions 394 to 829 (ESKIAIIGMS…GGNTALLVED (436 aa)) constitute a Ketosynthase family 3 (KS3) domain. Catalysis depends on for beta-ketoacyl synthase activity residues C566, H701, and H745. The malonyl-CoA:ACP transacylase (MAT) domain stretch occupies residues 929–1233 (AFVFSGQGSQ…PSLMRNKDGW (305 aa)). The active-site For acyl/malonyl transferase activity is the S1018. A product template (PT) domain region spans residues 1310–1624 (TASVHRIVHE…RKVLNTAMPP (315 aa)). Residues 1314–1447 (HRIVHESVDK…SSLHFEQPKV (134 aa)) are N-terminal hotdog fold. A PKS/mFAS DH domain is found at 1314–1619 (HRIVHESVDK…FQGIPRKVLN (306 aa)). The Proton acceptor; for dehydratase activity role is filled by H1346. Residues 1474–1619 (LNSRMSSGVI…FQGIPRKVLN (146 aa)) form a C-terminal hotdog fold region. D1533 functions as the Proton donor; for dehydratase activity in the catalytic mechanism. The tract at residues 1619 to 1657 (NTAMPPPKSQNEAPVRSAPAKPAAKPPKSASSEHSGHFA) is disordered. Low complexity predominate over residues 1635 to 1650 (SAPAKPAAKPPKSASS). Positions 1678–1752 (RNPMLAVFKI…DLATHLGLDT (75 aa)) constitute a Carrier 1 domain. Position 1712 is an O-(pantetheine 4'-phosphoryl)serine (S1712). A compositionally biased stretch (low complexity) spans 1755–1790 (SDQSSGQSSSSGGLSPRSDSIGEITSSATTPPSLSP). The disordered stretch occupies residues 1755 to 1796 (SDQSSGQSSSSGGLSPRSDSIGEITSSATTPPSLSPRGSVSG). The Carrier 2 domain occupies 1793 to 1870 (SVSGSQCKDV…SFKHMFQQGH (78 aa)). S1830 carries the O-(pantetheine 4'-phosphoryl)serine modification. Residues 1882 to 2146 (LKQYRATSTL…ERVAAFIRST (265 aa)) form a thioesterase (TE) domain region. S1973 functions as the For thioesterase activity in the catalytic mechanism.

Functionally, polyketide synthase; part of the Pks1 gene cluster that mediates the biosynthesis of an anthraquinone derivative pigment that contributes to conidial pigmentation that provides protection from UV radiation, heat and cold stress. The polyketide synthase Pks1 produces 1-acetyl-2,4,6,8-tetrahydroxy-9,10-anthraquinone though condensation of acetyl-CoA with malonyl-CoA. The dehydratase EthD and the laccase Mlac1 further convert the anthraquinone derivative into the final conidial pigment. The sequence is that of Polyketide synthase 1 from Metarhizium guizhouense (strain ARSEF 977).